The primary structure comprises 89 residues: Large ribosomal subunit protein uL29 (89 aa).

This sequence belongs to the universal ribosomal protein uL29 family.

In Frankia alni (strain DSM 45986 / CECT 9034 / ACN14a), this protein is Large ribosomal subunit protein uL29.